The primary structure comprises 650 residues: Acetyl-coenzyme A synthetase (650 aa).

Residues 191–194, Thr-311, and Asn-335 each bind CoA; that span reads RGGR. Residues 387 to 389, 411 to 416, Asp-500, and Arg-515 contribute to the ATP site; these read GEP and DTWWQT. A CoA-binding site is contributed by Ser-523. Residue Arg-526 participates in ATP binding. Val-537, His-539, and Val-542 together coordinate Mg(2+). CoA is bound at residue Arg-584. Lys-609 carries the N6-acetyllysine modification.

Belongs to the ATP-dependent AMP-binding enzyme family. It depends on Mg(2+) as a cofactor. In terms of processing, acetylated. Deacetylation by the SIR2-homolog deacetylase activates the enzyme.

The enzyme catalyses acetate + ATP + CoA = acetyl-CoA + AMP + diphosphate. In terms of biological role, catalyzes the conversion of acetate into acetyl-CoA (AcCoA), an essential intermediate at the junction of anabolic and catabolic pathways. AcsA undergoes a two-step reaction. In the first half reaction, AcsA combines acetate with ATP to form acetyl-adenylate (AcAMP) intermediate. In the second half reaction, it can then transfer the acetyl group from AcAMP to the sulfhydryl group of CoA, forming the product AcCoA. The protein is Acetyl-coenzyme A synthetase of Shewanella sediminis (strain HAW-EB3).